Reading from the N-terminus, the 89-residue chain is Putative regulatory protein MAE_11840 (89 aa).

The protein belongs to the RemA family.

This is Putative regulatory protein MAE_11840 from Microcystis aeruginosa (strain NIES-843 / IAM M-2473).